Here is a 463-residue protein sequence, read N- to C-terminus: Glycine--tRNA ligase (463 aa).

The substrate site is built by arginine 98 and glutamate 174. ATP contacts are provided by residues 206-208 (RNE), 216-221 (FRTREF), 290-291 (EL), and 334-337 (GADR). 221–225 (FEQME) contributes to the substrate binding site. 330–334 (EPSLG) serves as a coordination point for substrate.

It belongs to the class-II aminoacyl-tRNA synthetase family. Homodimer.

It is found in the cytoplasm. It carries out the reaction tRNA(Gly) + glycine + ATP = glycyl-tRNA(Gly) + AMP + diphosphate. Catalyzes the attachment of glycine to tRNA(Gly). The chain is Glycine--tRNA ligase from Staphylococcus haemolyticus (strain JCSC1435).